Reading from the N-terminus, the 117-residue chain is Venom nerve growth factor (117 aa).

3 cysteine pairs are disulfide-bonded: C12–C77, C55–C105, and C65–C107. The N-linked (GlcNAc...) asparagine glycan is linked to N21.

The protein belongs to the NGF-beta family. In terms of assembly, homodimer; non-covalently linked. Expressed by the venom gland.

It is found in the secreted. Nerve growth factor is important for the development and maintenance of the sympathetic and sensory nervous systems. It stimulates division and differentiation of sympathetic and embryonic sensory neurons as well as basal forebrain cholinergic neurons in the brain. Its relevance in the snake venom is not clear. However, it has been shown to inhibit metalloproteinase-dependent proteolysis of platelet glycoprotein Ib alpha, suggesting a metalloproteinase inhibition to prevent metalloprotease autodigestion and/or protection against prey proteases. Binds a lipid between the two protein chains in the homodimer. The lipid-bound form promotes histamine relase from mouse mast cells, contrary to the lipid-free form. This Daboia russelii (Russel's viper) protein is Venom nerve growth factor.